A 142-amino-acid chain; its full sequence is Small ribosomal subunit protein uS12 (142 aa).

A disordered region spans residues 1–44 (MTNGKYAARKLKKDRQQRRWSDSEYARRERGLGKKSDPLEGAPQ). The segment covering 7–16 (AARKLKKDRQ) has biased composition (basic residues). The span at 17 to 38 (QRRWSDSEYARRERGLGKKSDP) shows a compositional bias: basic and acidic residues.

It belongs to the universal ribosomal protein uS12 family. In terms of assembly, part of the 30S ribosomal subunit.

Functionally, with S4 and S5 plays an important role in translational accuracy. Located at the interface of the 30S and 50S subunits. The polypeptide is Small ribosomal subunit protein uS12 (Halobacterium salinarum (strain ATCC 29341 / DSM 671 / R1)).